Here is a 348-residue protein sequence, read N- to C-terminus: Putative methylthioribose-1-phosphate isomerase (348 aa).

Residues 55 to 57 (RGA), Arg98, and Gln203 contribute to the substrate site. Catalysis depends on Asp244, which acts as the Proton donor. Substrate is bound at residue 253 to 254 (NK).

Belongs to the eIF-2B alpha/beta/delta subunits family. MtnA subfamily.

The catalysed reaction is 5-(methylsulfanyl)-alpha-D-ribose 1-phosphate = 5-(methylsulfanyl)-D-ribulose 1-phosphate. In terms of biological role, catalyzes the interconversion of methylthioribose-1-phosphate (MTR-1-P) into methylthioribulose-1-phosphate (MTRu-1-P). This is Putative methylthioribose-1-phosphate isomerase from Methanosarcina acetivorans (strain ATCC 35395 / DSM 2834 / JCM 12185 / C2A).